The primary structure comprises 138 residues: MLIPRKVKHRKQHHPKQRGIASGGTSVSFGDYGIQALGHAYVTNRQIESARIAINRHIKRGGKVWINIFPDRPLTKKPAETRMGSGKGSPEWWVANVKPGRVLFELSYPDEKIAREALTRAIHKLPIKARIVTREEQF.

Basic residues predominate over residues 1-17 (MLIPRKVKHRKQHHPKQ). The segment at 1–24 (MLIPRKVKHRKQHHPKQRGIASGG) is disordered.

This sequence belongs to the universal ribosomal protein uL16 family. Part of the 50S ribosomal subunit.

Functionally, binds 23S rRNA and is also seen to make contacts with the A and possibly P site tRNAs. This Mycolicibacterium vanbaalenii (strain DSM 7251 / JCM 13017 / BCRC 16820 / KCTC 9966 / NRRL B-24157 / PYR-1) (Mycobacterium vanbaalenii) protein is Large ribosomal subunit protein uL16.